We begin with the raw amino-acid sequence, 323 residues long: Lipoyl synthase (323 aa).

[4Fe-4S] cluster is bound by residues C69, C74, C80, C95, C99, C102, and S310. Residues W81–R299 form the Radical SAM core domain.

Belongs to the radical SAM superfamily. Lipoyl synthase family. It depends on [4Fe-4S] cluster as a cofactor.

It is found in the cytoplasm. The catalysed reaction is [[Fe-S] cluster scaffold protein carrying a second [4Fe-4S](2+) cluster] + N(6)-octanoyl-L-lysyl-[protein] + 2 oxidized [2Fe-2S]-[ferredoxin] + 2 S-adenosyl-L-methionine + 4 H(+) = [[Fe-S] cluster scaffold protein] + N(6)-[(R)-dihydrolipoyl]-L-lysyl-[protein] + 4 Fe(3+) + 2 hydrogen sulfide + 2 5'-deoxyadenosine + 2 L-methionine + 2 reduced [2Fe-2S]-[ferredoxin]. It functions in the pathway protein modification; protein lipoylation via endogenous pathway; protein N(6)-(lipoyl)lysine from octanoyl-[acyl-carrier-protein]: step 2/2. Catalyzes the radical-mediated insertion of two sulfur atoms into the C-6 and C-8 positions of the octanoyl moiety bound to the lipoyl domains of lipoate-dependent enzymes, thereby converting the octanoylated domains into lipoylated derivatives. In Thermus thermophilus (strain ATCC 27634 / DSM 579 / HB8), this protein is Lipoyl synthase.